The chain runs to 324 residues: Cuticle collagen sqt-1 (324 aa).

Disordered stretches follow at residues 68 to 108 (RRQY…TPNG) and 129 to 324 (SGPK…YRNI). Residues 87–97 (SAPPGQPPAVP) are compositionally biased toward pro residues. 3 triple-helical region regions span residues 127 to 153 (GPSGPKGVPGVPGLDGVPGLDGVPGVG), 171 to 231 (QGPV…KGRD), and 237 to 299 (GRPG…PGKD). 2 stretches are compositionally biased toward low complexity: residues 129–156 (SGPKGVPGVPGLDGVPGLDGVPGVGADD) and 177–201 (PGALGRPGPRGLPGPRGQNGNPGRD). The span at 227-236 (EKGRDAEHPI) shows a compositional bias: basic and acidic residues.

Belongs to the cuticular collagen family. As to quaternary structure, collagen polypeptide chains are complexed within the cuticle by disulfide bonds and other types of covalent cross-links.

Its function is as follows. Nematode cuticles are composed largely of collagen-like proteins. The cuticle functions both as an exoskeleton and as a barrier to protect the worm from its environment. This is a collagen critical for organismal morphogenesis. Mutations in sqt-1 can lengthen, shorten, or helically twist the entire animal. The sequence is that of Cuticle collagen sqt-1 (sqt-1) from Caenorhabditis elegans.